The following is a 162-amino-acid chain: Probable chemoreceptor glutamine deamidase CheD 3 (162 aa).

It belongs to the CheD family.

The catalysed reaction is L-glutaminyl-[protein] + H2O = L-glutamyl-[protein] + NH4(+). In terms of biological role, probably deamidates glutamine residues to glutamate on methyl-accepting chemotaxis receptors (MCPs), playing an important role in chemotaxis. The polypeptide is Probable chemoreceptor glutamine deamidase CheD 3 (Geobacter sulfurreducens (strain ATCC 51573 / DSM 12127 / PCA)).